The chain runs to 557 residues: Urocanate hydratase (557 aa).

The disordered stretch occupies residues 1-20 (MSNPRHNEREVRSPRGDELN). Residues 52 to 53 (GG), Gln130, 176 to 178 (GMG), Glu196, Arg201, 242 to 243 (NA), 263 to 267 (QTSAH), 273 to 274 (YL), and Tyr322 contribute to the NAD(+) site. Residue Cys410 is part of the active site. Gly492 lines the NAD(+) pocket.

The protein belongs to the urocanase family. NAD(+) serves as cofactor.

The protein localises to the cytoplasm. The enzyme catalyses 4-imidazolone-5-propanoate = trans-urocanate + H2O. The protein operates within amino-acid degradation; L-histidine degradation into L-glutamate; N-formimidoyl-L-glutamate from L-histidine: step 2/3. Catalyzes the conversion of urocanate to 4-imidazolone-5-propionate. In Brucella melitensis biotype 2 (strain ATCC 23457), this protein is Urocanate hydratase.